The primary structure comprises 188 residues: Elongation factor P (188 aa).

N6-(3,6-diaminohexanoyl)-5-hydroxylysine is present on K34.

The protein belongs to the elongation factor P family. In terms of processing, may be beta-lysylated on the epsilon-amino group of Lys-34 by the combined action of EpmA and EpmB, and then hydroxylated on the C5 position of the same residue by EpmC (if this protein is present). Lysylation is critical for the stimulatory effect of EF-P on peptide-bond formation. The lysylation moiety may extend toward the peptidyltransferase center and stabilize the terminal 3-CCA end of the tRNA. Hydroxylation of the C5 position on Lys-34 may allow additional potential stabilizing hydrogen-bond interactions with the P-tRNA.

The protein localises to the cytoplasm. It functions in the pathway protein biosynthesis; polypeptide chain elongation. Involved in peptide bond synthesis. Alleviates ribosome stalling that occurs when 3 or more consecutive Pro residues or the sequence PPG is present in a protein, possibly by augmenting the peptidyl transferase activity of the ribosome. Modification of Lys-34 is required for alleviation. The sequence is that of Elongation factor P from Xanthomonas axonopodis pv. citri (strain 306).